The following is a 374-amino-acid chain: Biotin synthase (374 aa).

One can recognise a Radical SAM core domain in the interval 51–278 (NTVKVNYLVN…DTEIRIAGGR (228 aa)). The [4Fe-4S] cluster site is built by cysteine 66, cysteine 70, and cysteine 73. Residues cysteine 110, cysteine 143, cysteine 203, and arginine 273 each coordinate [2Fe-2S] cluster. Residues 346-374 (IAGGTSVAGSAPDPAIRRRGAGTDVPANA) form a disordered region.

It belongs to the radical SAM superfamily. Biotin synthase family. As to quaternary structure, homodimer. The cofactor is [4Fe-4S] cluster. It depends on [2Fe-2S] cluster as a cofactor.

It carries out the reaction (4R,5S)-dethiobiotin + (sulfur carrier)-SH + 2 reduced [2Fe-2S]-[ferredoxin] + 2 S-adenosyl-L-methionine = (sulfur carrier)-H + biotin + 2 5'-deoxyadenosine + 2 L-methionine + 2 oxidized [2Fe-2S]-[ferredoxin]. It participates in cofactor biosynthesis; biotin biosynthesis; biotin from 7,8-diaminononanoate: step 2/2. Catalyzes the conversion of dethiobiotin (DTB) to biotin by the insertion of a sulfur atom into dethiobiotin via a radical-based mechanism. This chain is Biotin synthase, found in Nocardioides sp. (strain ATCC BAA-499 / JS614).